Consider the following 571-residue polypeptide: GABA-specific permease (571 aa).

Residues 1–73 (MSMSSKNENK…IGYKQELKRQ (73 aa)) are Cytoplasmic-facing. The chain crosses the membrane as a helical span at residues 74–94 (FSTLQVFGIAFSIMGLLPSIA). At 95 to 105 (SVMGGGLGGGP) the chain is on the vacuolar side. A helical transmembrane segment spans residues 106–126 (ATLVWGWFVAAFFILLVGITM). Over 127–153 (AEHASSIPTAGGLYYWTYYYAPEGYKE) the chain is Cytoplasmic. Residues 154 to 174 (IISFIIGCSNSLALAAGVCSI) form a helical membrane-spanning segment. The Vacuolar portion of the chain corresponds to 175 to 198 (DYGLAEEIAAAVTLTKDGNFEVTS). A helical transmembrane segment spans residues 199–219 (GKLYGIFAGAVVVMCICTCVA). Residues 220–228 (SGAIARLQT) lie on the Cytoplasmic side of the membrane. The chain crosses the membrane as a helical span at residues 229–249 (LSIFANLFIIVLLFIALPIGT). Topologically, residues 250–271 (KHRMGGFNDGDFIFGKYENLSD) are vacuolar. A helical transmembrane segment spans residues 272-292 (WNNGWQFCLAGFMPAVWTIGS). Over 293-312 (FDSCVHQSEEAKDAKKSVPI) the chain is Cytoplasmic. A helical transmembrane segment spans residues 313–333 (GIISSIAVCWILGWLIIICLM). Residues 334-364 (ACINPDIDSVLDSKYGFALAQIIYDSLGKKW) are Vacuolar-facing. Residues 365–385 (AIAFMSLIAFCQFLMGASITT) traverse the membrane as a helical segment. Over 386-416 (AVSRQVWAFSRDNGLPLSKYIKRVDSKYSVP) the chain is Cytoplasmic. The helical transmembrane segment at 417–437 (FFAILAACVGSLILGLLCLID) threads the bilayer. Over 438-441 (DAAT) the chain is Vacuolar. A helical membrane pass occupies residues 442–462 (DALFSLAVAGNNLAWSTPTVF). The Cytoplasmic portion of the chain corresponds to 463–482 (RLTSGRDLFRPGPFYLGKIW). The chain crosses the membrane as a helical span at residues 483–503 (SPIVAWTGVAFQLFIIILVMF). At 504-514 (PSQQHGITKST) the chain is on the vacuolar side. A helical transmembrane segment spans residues 515–535 (MNYACVIGPGIWILAGIYYKV). The Cytoplasmic portion of the chain corresponds to 536–571 (YKKKYYHGPATNLSDDDYTEAVGADVIDTIMSKQEP).

This sequence belongs to the amino acid-polyamine-organocation (APC) superfamily. Amino acid/choline transporter (ACT) (TC 2.A.3.4) family.

It localises to the vacuole membrane. In terms of biological role, required for high-affinity, high-specificity GABA transport. Also transports putrescine. In Saccharomyces cerevisiae (strain ATCC 204508 / S288c) (Baker's yeast), this protein is GABA-specific permease (UGA4).